Reading from the N-terminus, the 450-residue chain is Akuammiline synthase 2 (450 aa).

The Proton acceptor role is filled by His154. The short motif at 218–225 is the Nuclear localization signal element; sequence MRRFVFDA. Residue Asp376 is the Proton acceptor of the active site.

It belongs to the plant acyltransferase family. Monomer.

It localises to the cytoplasm. Its subcellular location is the nucleus. It carries out the reaction rhazimol + acetyl-CoA = akuammiline + CoA + H(+). It functions in the pathway alkaloid biosynthesis. In terms of biological role, acyltransferase involved in the biosynthesis of akuammilan monoterpene indole alkaloids (MIAs) natural products, components with various biological properties such as antidiabetic, antibacterial, anti-inflammatory, anticancer, and antimalarial activities. Catalyzes the conversion of rhazimol to akuammiline. The protein is Akuammiline synthase 2 of Alstonia scholaris (Dogbane).